The chain runs to 363 residues: Branched-chain-amino-acid aminotransferase 2 (363 aa).

Lys197 carries the N6-(pyridoxal phosphate)lysine modification.

The protein belongs to the class-IV pyridoxal-phosphate-dependent aminotransferase family. Requires pyridoxal 5'-phosphate as cofactor.

The catalysed reaction is L-leucine + 2-oxoglutarate = 4-methyl-2-oxopentanoate + L-glutamate. It carries out the reaction L-isoleucine + 2-oxoglutarate = (S)-3-methyl-2-oxopentanoate + L-glutamate. The enzyme catalyses L-valine + 2-oxoglutarate = 3-methyl-2-oxobutanoate + L-glutamate. The protein operates within amino-acid biosynthesis; L-isoleucine biosynthesis; L-isoleucine from 2-oxobutanoate: step 4/4. It functions in the pathway amino-acid biosynthesis; L-leucine biosynthesis; L-leucine from 3-methyl-2-oxobutanoate: step 4/4. Its pathway is amino-acid biosynthesis; L-valine biosynthesis; L-valine from pyruvate: step 4/4. Its activity is regulated as follows. Inhibited by canaline. In terms of biological role, transaminates branched-chain amino acids and ketoglutarate. The chain is Branched-chain-amino-acid aminotransferase 2 (ilvK) from Bacillus subtilis (strain 168).